The chain runs to 172 residues: Histone H1-like protein HC2 (172 aa).

The interval 1–77 (MIGAQKKQSG…TVAKKPAVKK (77 aa)) is disordered. Residues 8 to 77 (QSGKKTASRA…TVAKKPAVKK (70 aa)) are compositionally biased toward basic residues.

It belongs to the histone H1/H5 family. HCT subfamily.

Might have a role in establishing the nucleoid structure of elementary bodies. This chain is Histone H1-like protein HC2 (hctB), found in Chlamydia pneumoniae (Chlamydophila pneumoniae).